A 152-amino-acid chain; its full sequence is MKIESTRFGTLDVAPEQIIHFPHGIPGFLGEKAFVHLPHDENSPFSFLQSTAEADLSFLLIDPFSFIPEYEFVLSDEMAGELELSEENPPQVFLIGTVREKITDMTVNLLAPIVVNRNKSIGRQIILDKTEYSIRHKLFSEAKASETPEGGK.

Belongs to the FliW family. Interacts with translational regulator CsrA and flagellin(s).

It is found in the cytoplasm. In terms of biological role, acts as an anti-CsrA protein, binds CsrA and prevents it from repressing translation of its target genes, one of which is flagellin. Binds to flagellin and participates in the assembly of the flagellum. This Desulfitobacterium hafniense (strain Y51) protein is Flagellar assembly factor FliW.